A 155-amino-acid polypeptide reads, in one-letter code: Ribosome maturation factor RimP (155 aa).

The protein belongs to the RimP family.

The protein resides in the cytoplasm. Required for maturation of 30S ribosomal subunits. This is Ribosome maturation factor RimP from Parabacteroides distasonis (strain ATCC 8503 / DSM 20701 / CIP 104284 / JCM 5825 / NCTC 11152).